An 84-amino-acid chain; its full sequence is Dolichol phosphate-mannose biosynthesis regulatory protein (84 aa).

A run of 2 helical transmembrane segments spans residues 11–31 and 49–69; these read FGLV…VILL and YAVL…GLFI.

The protein belongs to the DPM2 family. Component of the dolichol-phosphate mannose (DPM) synthase complex composed of DPM1, DPM2 and DPM3; in the complex interacts directly with DPM3. Component of the glycosylphosphatidylinositol-N-acetylglucosaminyltransferase (GPI-GnT) complex composed at least by PIGA, PIGC, PIGH, PIGP, PIGQ, PIGY and DPM2. Interacts with PIGA, PIGC and PIGQ.

It localises to the endoplasmic reticulum membrane. It participates in protein modification; protein glycosylation. Functionally, regulates the biosynthesis of dolichol phosphate-mannose. Regulatory subunit of the dolichol-phosphate mannose (DPM) synthase complex; essential for the ER localization and stable expression of DPM1. Part of the glycosylphosphatidylinositol-N-acetylglucosaminyltransferase (GPI-GnT) complex that catalyzes the transfer of N-acetylglucosamine from UDP-N-acetylglucosamine to phosphatidylinositol and participates in the first step of GPI biosynthesis. May act by regulating the GPI-GNT complex. The protein is Dolichol phosphate-mannose biosynthesis regulatory protein of Mus musculus (Mouse).